Here is a 132-residue protein sequence, read N- to C-terminus: Small ribosomal subunit protein uS11 (132 aa).

Over residues 1–16 the composition is skewed to basic residues; sequence MAAGMKGKRSRRRKER. Residues 1-20 are disordered; that stretch reads MAAGMKGKRSRRRKERKNVE.

It belongs to the universal ribosomal protein uS11 family. In terms of assembly, part of the 30S ribosomal subunit. Interacts with proteins S7 and S18. Binds to IF-3.

Functionally, located on the platform of the 30S subunit, it bridges several disparate RNA helices of the 16S rRNA. Forms part of the Shine-Dalgarno cleft in the 70S ribosome. This Clostridium botulinum (strain Loch Maree / Type A3) protein is Small ribosomal subunit protein uS11.